Consider the following 509-residue polypeptide: Maturase K (509 aa).

This sequence belongs to the intron maturase 2 family. MatK subfamily.

Its subcellular location is the plastid. It is found in the chloroplast. Functionally, usually encoded in the trnK tRNA gene intron. Probably assists in splicing its own and other chloroplast group II introns. The chain is Maturase K from Solanum tuberosum (Potato).